Reading from the N-terminus, the 683-residue chain is Amphiphysin (683 aa).

Coiled coils occupy residues 10–83 (AKNV…SLHE) and 144–191 (DYDS…QEEL). Residues 24 to 240 (VLQKLGKADE…MTKLGDQHAD (217 aa)) enclose the BAR domain. Disordered regions lie at residues 244–311 (SIQG…KVTP), 421–443 (AETEQALPTEPQAEEPPTTAAAP), and 455–599 (EPKE…ASLS). Serine 252 is modified (phosphoserine). Threonine 260 carries the post-translational modification Phosphothreonine. A compositionally biased stretch (pro residues) spans 261–274 (PSPPEEASPLPSPT). A phosphoserine mark is found at serine 262, serine 268, serine 272, and serine 276. At threonine 280 the chain carries Phosphothreonine. Composition is skewed to low complexity over residues 424–443 (EQALPTEPQAEEPPTTAAAP) and 468–477 (AGETVGTEGS). Residue serine 496 is modified to Phosphoserine. The segment covering 539–559 (SNHEGEEHQETTTGTETREAT) has biased composition (basic and acidic residues). The span at 585–596 (AATPAPAGAVDA) shows a compositional bias: low complexity. The SH3 domain occupies 610–683 (GFLYKVETLH…FPENFTRHLE (74 aa)). Position 626 is a phosphoserine (serine 626).

In terms of assembly, heterodimer with BIN1. Binds SH3GLB1. Interacts with REPS1 and SGIP1. Binds AP2A2. Interacts with AP2B1. Interacts with DNM1 and SYNJ1.

The protein localises to the cytoplasmic vesicle. The protein resides in the secretory vesicle. Its subcellular location is the synaptic vesicle membrane. It localises to the cytoplasm. It is found in the cytoskeleton. Functionally, may participate in mechanisms of regulated exocytosis in synapses and certain endocrine cell types. May control the properties of the membrane associated cytoskeleton. The sequence is that of Amphiphysin (Amph) from Rattus norvegicus (Rat).